The following is a 401-amino-acid chain: Probable [pyruvate dehydrogenase (acetyl-transferring)] kinase, mitochondrial (401 aa).

Residues 131-360 form the Histidine kinase domain; the sequence is LIELRESDGV…DACIYLKAVP (230 aa). Residues 247–254, aspartate 286, 305–306, and 321–326 contribute to the ATP site; these read ELFKNAMR, ST, and GYGYGL.

Belongs to the PDK/BCKDK protein kinase family.

Its subcellular location is the mitochondrion matrix. The enzyme catalyses L-seryl-[pyruvate dehydrogenase E1 alpha subunit] + ATP = O-phospho-L-seryl-[pyruvate dehydrogenase E1 alpha subunit] + ADP + H(+). In terms of biological role, inhibits the mitochondrial pyruvate dehydrogenase complex by phosphorylation of the E1 alpha subunit, thus contributing to the regulation of glucose metabolism. Required for normal lifespan. This Caenorhabditis elegans protein is Probable [pyruvate dehydrogenase (acetyl-transferring)] kinase, mitochondrial (pdhk-2).